Reading from the N-terminus, the 491-residue chain is Cytochrome P450 2F3 (491 aa).

Cysteine 436 provides a ligand contact to heme.

Belongs to the cytochrome P450 family. The cofactor is heme. Lung specific.

It localises to the endoplasmic reticulum membrane. The protein resides in the microsome membrane. The catalysed reaction is an organic molecule + reduced [NADPH--hemoprotein reductase] + O2 = an alcohol + oxidized [NADPH--hemoprotein reductase] + H2O + H(+). Functionally, bioactivates 3-methylindole (3MI) by dehydrogenation to the putative electrophile 3-methylene-indolenine. Stereoselectively catalyzes the formation of the 1R,2S-oxide from naphthalene. Lack activity with other common P450 substrates including 7-ethoxycoumarin. This chain is Cytochrome P450 2F3 (CYP2F3), found in Capra hircus (Goat).